A 353-amino-acid polypeptide reads, in one-letter code: Chorismate synthase (353 aa).

Residues Arg48 and Arg54 each coordinate NADP(+). FMN is bound by residues 125-127 (RSS), 238-239 (NA), Gly278, 293-297 (KPTSS), and Arg319.

The protein belongs to the chorismate synthase family. Homotetramer. FMNH2 serves as cofactor.

It carries out the reaction 5-O-(1-carboxyvinyl)-3-phosphoshikimate = chorismate + phosphate. It participates in metabolic intermediate biosynthesis; chorismate biosynthesis; chorismate from D-erythrose 4-phosphate and phosphoenolpyruvate: step 7/7. Catalyzes the anti-1,4-elimination of the C-3 phosphate and the C-6 proR hydrogen from 5-enolpyruvylshikimate-3-phosphate (EPSP) to yield chorismate, which is the branch point compound that serves as the starting substrate for the three terminal pathways of aromatic amino acid biosynthesis. This reaction introduces a second double bond into the aromatic ring system. The polypeptide is Chorismate synthase (Buchnera aphidicola subsp. Schizaphis graminum (strain Sg)).